A 170-amino-acid polypeptide reads, in one-letter code: Small ribosomal subunit protein bS16 (170 aa).

The disordered stretch occupies residues 109 to 170 (ALAEAEGGPS…AAESEAPAAE (62 aa)). Basic and acidic residues predominate over residues 131 to 150 (AKKDEQPTEKAAEPAAEKAA). Low complexity predominate over residues 151-170 (EPAAEAPAEAAAESEAPAAE).

This sequence belongs to the bacterial ribosomal protein bS16 family.

This Mycolicibacterium gilvum (strain PYR-GCK) (Mycobacterium gilvum (strain PYR-GCK)) protein is Small ribosomal subunit protein bS16.